The following is a 342-amino-acid chain: Photosystem II D2 protein (342 aa).

The Cytoplasmic portion of the chain corresponds to 1-29 (ERGWFDILDDWLKRDRFVFVGWSGILLFP). A helical transmembrane segment spans residues 30–50 (CAYLALGGWLTGTTFVTSWYT). The Lumenal portion of the chain corresponds to 51-113 (HGLASSYLEG…IALHGAFGLI (63 aa)). His107 contacts chlorophyll a. A helical transmembrane segment spans residues 114-130 (GFMLRQFEIARLVGVRP). 2 residues coordinate pheophytin a: Gln119 and Asn132. Topologically, residues 131-141 (YNAIAFSAPIA) are cytoplasmic. Residues 142–155 (VFVSVFLIYPLGQS) traverse the membrane as a helical segment. Topologically, residues 156-196 (SWFFAPSFGVAAIFRFLLFFQGFHNWTLNPFHMMGVAGVLG) are lumenal. A chlorophyll a-binding site is contributed by His187. The chain crosses the membrane as a helical span at residues 197 to 217 (GALLCAIHGATVENTLFQDGE). His204 and Phe251 together coordinate a plastoquinone. Residue His204 participates in Fe cation binding. At 218-267 (GASTFRAFNPTQAEETYSMVTANRFWSQIFGIAFSNKRWLHFFMLFVPVT) the chain is on the cytoplasmic side. His258 provides a ligand contact to Fe cation. A helical transmembrane segment spans residues 268–284 (GLWMSAIGVVGLALNLR). The Lumenal segment spans residues 285-342 (SYDFISQEIRAAEDPEFETFYTKNLLLNEGIRAWMAPQDQPHENFVFPEEVLPRGNAL).

It belongs to the reaction center PufL/M/PsbA/D family. As to quaternary structure, PSII is composed of 1 copy each of membrane proteins PsbA, PsbB, PsbC, PsbD, PsbE, PsbF, PsbH, PsbI, PsbJ, PsbK, PsbL, PsbM, PsbT, PsbX, PsbY, PsbZ, Psb30/Ycf12, peripheral proteins PsbO, CyanoQ (PsbQ), PsbU, PsbV and a large number of cofactors. It forms dimeric complexes. The cofactor is The D1/D2 heterodimer binds P680, chlorophylls that are the primary electron donor of PSII, and subsequent electron acceptors. It shares a non-heme iron and each subunit binds pheophytin, quinone, additional chlorophylls, carotenoids and lipids. There is also a Cl(-1) ion associated with D1 and D2, which is required for oxygen evolution. The PSII complex binds additional chlorophylls, carotenoids and specific lipids..

It is found in the cellular thylakoid membrane. The catalysed reaction is 2 a plastoquinone + 4 hnu + 2 H2O = 2 a plastoquinol + O2. Photosystem II (PSII) is a light-driven water:plastoquinone oxidoreductase that uses light energy to abstract electrons from H(2)O, generating O(2) and a proton gradient subsequently used for ATP formation. It consists of a core antenna complex that captures photons, and an electron transfer chain that converts photonic excitation into a charge separation. The D1/D2 (PsbA/PsbD) reaction center heterodimer binds P680, the primary electron donor of PSII as well as several subsequent electron acceptors. D2 is needed for assembly of a stable PSII complex. This is Photosystem II D2 protein from Thermostichus vulcanus (Synechococcus vulcanus).